Consider the following 119-residue polypeptide: uncharacterized protein (119 aa).

This is an uncharacterized protein from Escherichia coli O157:H7.